Here is a 271-residue protein sequence, read N- to C-terminus: Transcription factor PU.1 (271 aa).

A disordered region spans residues 124–164 (LSPAHQQSSDEEEGERQSPPLEVSDGEADGLEPGPGLLHGE). Phosphoserine occurs at positions 141 and 147. A compositionally biased stretch (low complexity) spans 154-164 (LEPGPGLLHGE). The segment at residues 171–254 (IRLYQFLLDL…VKKKLTYQFS (84 aa)) is a DNA-binding region (ETS). DNA contacts are provided by lysine 218, arginine 231, arginine 234, and lysine 244.

Belongs to the ETS family. Binds DNA as a monomer. Can form homomers. Directly interacts with CEBPD/NF-IL6-beta; this interaction does not affect DNA-binding properties of each partner. Interacts with NONO/p54(nrb). Interacts with RUNX1/AML1. Interacts with GFI1; the interaction represses SPI1 transcriptional activity, hence blocks SPI1-induced macrophage differentiation of myeloid progenitor cells. Interacts with CEBPE. Interacts with IRF4/Pip and IRF8. Interacts with JUN. Interacts with RB1. Interacts with TBP.

It localises to the nucleus. Its activity is regulated as follows. Transcriptional activity at macrophage-specific genes is inhibited by interaction with GFI1, which results in the inhibition of SPI1-induced macrophage differentiation of myeloid progenitor cells, but not that of the granulocyte lineage. Its function is as follows. Pioneer transcription factor, which controls hematopoietic cell fate by decompacting stem cell heterochromatin and allowing other transcription factors to enter otherwise inaccessible genomic sites. Once in open chromatin, can directly control gene expression by binding genetic regulatory elements and can also more broadly influence transcription by recruiting transcription factors, such as interferon regulatory factors (IRFs), to otherwise inaccessible genomic regions. Transcriptionally activates genes important for myeloid and lymphoid lineages, such as CSF1R or FCER1A. Transcriptional activation from certain promoters, possibly containing low affinity binding sites, is achieved cooperatively with other transcription factors. FCER1A transactivation is achieved in cooperation with GATA1. May be particularly important for the pro- to pre-B cell transition. Binds (via the ETS domain) onto the purine-rich DNA core sequence 5'-GAGGAA-3', also known as the PU-box. In vitro can bind RNA and interfere with pre-mRNA splicing. This chain is Transcription factor PU.1 (Spi1), found in Rattus norvegicus (Rat).